The primary structure comprises 466 residues: Cytochrome P450 85A (466 aa).

Residues 2 to 22 traverse the membrane as a helical segment; that stretch reads ALFMAILGVLVLLLCLCSALL. A heme-binding site is contributed by Cys414.

This sequence belongs to the cytochrome P450 family. Heme serves as cofactor.

Its subcellular location is the membrane. In terms of biological role, catalyzes the C6-oxidation step in brassinosteroids biosynthesis. This chain is Cytochrome P450 85A, found in Phaseolus vulgaris (Kidney bean).